We begin with the raw amino-acid sequence, 252 residues long: Imidazole glycerol phosphate synthase subunit HisF (252 aa).

Catalysis depends on residues Asp11 and Asp130.

It belongs to the HisA/HisF family. Heterodimer of HisH and HisF.

The protein localises to the cytoplasm. It catalyses the reaction 5-[(5-phospho-1-deoxy-D-ribulos-1-ylimino)methylamino]-1-(5-phospho-beta-D-ribosyl)imidazole-4-carboxamide + L-glutamine = D-erythro-1-(imidazol-4-yl)glycerol 3-phosphate + 5-amino-1-(5-phospho-beta-D-ribosyl)imidazole-4-carboxamide + L-glutamate + H(+). It functions in the pathway amino-acid biosynthesis; L-histidine biosynthesis; L-histidine from 5-phospho-alpha-D-ribose 1-diphosphate: step 5/9. In terms of biological role, IGPS catalyzes the conversion of PRFAR and glutamine to IGP, AICAR and glutamate. The HisF subunit catalyzes the cyclization activity that produces IGP and AICAR from PRFAR using the ammonia provided by the HisH subunit. The sequence is that of Imidazole glycerol phosphate synthase subunit HisF from Thermococcus gammatolerans (strain DSM 15229 / JCM 11827 / EJ3).